Reading from the N-terminus, the 290-residue chain is Zinc finger matrin-type protein 3 (290 aa).

Matrin-type zinc fingers lie at residues 70-100 (LFCK…KLRN) and 148-178 (DYCK…RLRL). Disordered regions lie at residues 182–203 (QSHS…EGSE) and 266–290 (ESKQ…GYVQ). The Matrin-type 3 zinc-finger motif lies at 246-276 (FYCSMCNVGAGEEVEFRQHLESKQHKSKVSE). Positions 266–283 (ESKQHKSKVSEQRYRSEM) are enriched in basic and acidic residues.

As to quaternary structure, interacts with dsRNA. As to expression, constitutively expressed in brain and testis. Also expressed in lung, kidney and spleen after whole body gamma irradiation.

It localises to the nucleus. The protein resides in the nucleolus. Functionally, acts as a bona fide target gene of p53/TP53. May play a role in the TP53-dependent growth regulatory pathway. May contribute to TP53-mediated apoptosis by regulation of TP53 expression and translocation to the nucleus and nucleolus. The polypeptide is Zinc finger matrin-type protein 3 (Mus musculus (Mouse)).